A 55-amino-acid polypeptide reads, in one-letter code: ATP synthase small subunit 6, mitochondrial (55 aa).

The transit peptide at M1–W15 directs the protein to the mitochondrion. The chain crosses the membrane as a helical span at residues P20–F39.

The protein belongs to the ATPase 6 subunit family.

Its subcellular location is the mitochondrion inner membrane. Functionally, mitochondrial membrane ATP synthase (F(1)F(0) ATP synthase or Complex V) produces ATP from ADP in the presence of a proton gradient across the membrane which is generated by electron transport complexes of the respiratory chain. F-type ATPases consist of two structural domains, F(1) - containing the extramembraneous catalytic core and F(0) - containing the membrane proton channel, linked together by a central stalk and a peripheral stalk. During catalysis, ATP synthesis in the catalytic domain of F(1) is coupled via a rotary mechanism of the central stalk subunits to proton translocation. Part of the complex F(0) domain. Confers tolerance to several abiotic stresses (e.g. salt, mannitol, drought, oxidative and cold stresses), probably by providing additional energy needed for cell homeostasis. This Solanum tuberosum (Potato) protein is ATP synthase small subunit 6, mitochondrial.